Here is a 369-residue protein sequence, read N- to C-terminus: MADGVRAVVADDSHFMRSVISDILSDGGIDVVAQARDGEEAVSAVIEHRPDVVTMDVEMPVMNGIEATERIMAESPTPVLMLSAHTDENADVTFEALDKGAVDFFTKPGGEVSMEMSRLKDQLVEMVSSVAAVDVGATGSRSGTGSDSGTAPTTAGGSATDRRGTGGSSGQTTYVANPTLVIGSSTGGPKMVEQVMENLPIEADLRVLIIQHMPEGFTGRFAERINTRSDYEVQEATDGARIGGGEGLVAAGDRHMEVKNYRNGRLRTKLTQDEPVNSVRPAVDVTMQTAAETIDDPLVGLILTGMGEDGADGIRRIKQAGGKTIAQDEATSAVYGMPKRAAETGCVDTVLPIDDIADGVIDTITTEVT.

In terms of domain architecture, Response regulatory spans 6–122; the sequence is RAVVADDSHF…SMEMSRLKDQ (117 aa). D56 bears the 4-aspartylphosphate mark. A disordered region spans residues 136–178; it reads GATGSRSGTGSDSGTAPTTAGGSATDRRGTGGSSGQTTYVANP. Low complexity predominate over residues 138-159; that stretch reads TGSRSGTGSDSGTAPTTAGGSA. The 195-residue stretch at 173 to 367 folds into the CheB-type methylesterase domain; it reads TYVANPTLVI…DGVIDTITTE (195 aa). Active-site residues include S185, H212, and D309.

Belongs to the CheB family. Phosphorylated by CheA. Phosphorylation of the N-terminal regulatory domain activates the methylesterase activity.

The protein localises to the cytoplasm. It carries out the reaction [protein]-L-glutamate 5-O-methyl ester + H2O = L-glutamyl-[protein] + methanol + H(+). The catalysed reaction is L-glutaminyl-[protein] + H2O = L-glutamyl-[protein] + NH4(+). Its function is as follows. Involved in chemotaxis. Part of a chemotaxis signal transduction system that modulates chemotaxis in response to various stimuli. Catalyzes the demethylation of specific methylglutamate residues introduced into the chemoreceptors (methyl-accepting chemotaxis proteins or MCP) by CheR. Also mediates the irreversible deamidation of specific glutamine residues to glutamic acid. The chain is Protein-glutamate methylesterase/protein-glutamine glutaminase from Haloarcula marismortui (strain ATCC 43049 / DSM 3752 / JCM 8966 / VKM B-1809) (Halobacterium marismortui).